The following is a 900-amino-acid chain: Alpha-actinin-3 (900 aa).

At M1 the chain carries N-acetylmethionine. The interval 1–26 (MMMVMQPEGLGAGEGPFSGGGGGEYM) is disordered. The segment at 1–260 (MMMVMQPEGL…IMTYVSCFYH (260 aa)) is actin-binding. The segment covering 10-24 (LGAGEGPFSGGGGGE) has biased composition (gly residues). Calponin-homology (CH) domains are found at residues 44 to 148 (KQQR…LRFA) and 157 to 263 (TSAK…HAFA). Spectrin repeat units follow at residues 287-397 (KLME…WLLS), 407-512 (HLAE…ALER), 522-633 (QLQL…TLQE), and 643-746 (RLRR…EVEN). 2 EF-hand domains span residues 759-794 (EQLN…MGYD) and 795-830 (LGEV…ETAE). 6 residues coordinate Ca(2+): D772, N776, M778, D783, D808, and N810.

It belongs to the alpha-actinin family. Homodimer; antiparallel. Also forms heterodimers with ACTN2. Interacts with MYOZ1. As to expression, expression restricted to skeletal muscle fast (type 2) fibers (at protein level).

Functionally, F-actin cross-linking protein which is thought to anchor actin to a variety of intracellular structures. This is a bundling protein. The polypeptide is Alpha-actinin-3 (Actn3) (Mus musculus (Mouse)).